The chain runs to 254 residues: 5-oxoprolinase subunit A (254 aa).

This sequence belongs to the LamB/PxpA family. As to quaternary structure, forms a complex composed of PxpA, PxpB and PxpC.

It catalyses the reaction 5-oxo-L-proline + ATP + 2 H2O = L-glutamate + ADP + phosphate + H(+). Functionally, catalyzes the cleavage of 5-oxoproline to form L-glutamate coupled to the hydrolysis of ATP to ADP and inorganic phosphate. The polypeptide is 5-oxoprolinase subunit A (Burkholderia orbicola (strain MC0-3)).